A 273-amino-acid chain; its full sequence is Petrobactin import ATP-binding protein FpuD (273 aa).

An ABC transporter domain is found at 5-241 (LETKRLTLSY…KLVRDVFRME (237 aa)). Residue 37-44 (GSNGCGKS) coordinates ATP.

The protein belongs to the ABC transporter superfamily. In terms of assembly, the complex is composed of two ATP-binding proteins (FpuD), two transmembrane proteins (FpuB) and a solute-binding protein (FpuA).

The protein resides in the cell membrane. The catalysed reaction is a Fe(III)-siderophore(out) + ATP + H2O = a Fe(III)-siderophore(in) + ADP + phosphate + H(+). In terms of biological role, part of an ABC transporter complex involved in ferric-petrobactin uptake. Probably responsible for energy coupling to the transport system. The sequence is that of Petrobactin import ATP-binding protein FpuD from Bacillus anthracis.